Consider the following 947-residue polypeptide: Protocadherin alpha-4 (947 aa).

Residues 1–29 form the signal peptide; the sequence is MEFSWGSGQESRRLLLLLLLLSAWEAGNG. 6 consecutive Cadherin domains span residues 30–133, 134–242, 243–350, 351–455, 456–565, and 588–678; these read QLHY…PPVF, PATQ…APAF, DRTI…VPDL, EFKS…APAF, AQPE…APAL, and DHVV…APKA. The Extracellular segment spans residues 30 to 697; the sequence is QLHYSVSEEA…GPDAALVDVN (668 aa). The cysteines at positions 96 and 102 are disulfide-linked. 3 N-linked (GlcNAc...) asparagine glycosylation sites follow: asparagine 139, asparagine 257, and asparagine 265. N-linked (GlcNAc...) asparagine glycosylation occurs at asparagine 548. Residues 698–718 form a helical membrane-spanning segment; sequence VYLIIAICAVSSLLVLTLLLY. Topologically, residues 719–947 are cytoplasmic; the sequence is TALRCSAPPT…GNSTTDNSDQ (229 aa). 6 PXXP repeats span residues 734-737, 774-777, 796-799, 829-832, 870-873, and 888-891; these read PGKP, PSLP, PRQP, PGGP, PGNP, and PGSP. The 6 X 4 AA repeats of P-X-X-P stretch occupies residues 734–891; sequence PGKPTLVCSS…PDKFIIPGSP (158 aa). Residues 738–947 form a required for interaction with FYN region; sequence TLVCSSAVGS…GNSTTDNSDQ (210 aa). Disordered regions lie at residues 754-805 and 828-853; these read RRPR…DWRY and GPGGPDQQWPTVSSATPEPEAGEVSP. Residues 892–947 are disordered; it reads AIISIRQEPANSQIDKSDFITFGKKEETKKKKKKKKGNKTQEKKEKGNSTTDNSDQ. The segment covering 906–920 has biased composition (basic and acidic residues); the sequence is DKSDFITFGKKEETK.

Forms homodimers in trans (molecules expressed by two different cells). Forms promiscuous heterodimers in cis (at the plasma membrane of the same cell) with other protocadherins. Interacts with FYN.

It localises to the cell membrane. Calcium-dependent cell-adhesion protein involved in cells self-recognition and non-self discrimination. Thereby, it is involved in the establishment and maintenance of specific neuronal connections in the brain. This chain is Protocadherin alpha-4, found in Pan troglodytes (Chimpanzee).